The sequence spans 373 residues: Alanine dehydrogenase (373 aa).

Arginine 15 and lysine 75 together coordinate substrate. The active-site Proton donor/acceptor is the histidine 96. NAD(+) contacts are provided by residues serine 134, 178–179 (IV), aspartate 198, serine 220, 239–240 (VL), 267–270 (VAID), arginine 280, and 299–302 (VANI). Catalysis depends on aspartate 270, which acts as the Proton donor/acceptor.

It belongs to the AlaDH/PNT family. Homohexamer. Trimer of dimer.

Its subcellular location is the cytoplasm. The enzyme catalyses L-alanine + NAD(+) + H2O = pyruvate + NH4(+) + NADH + H(+). The protein operates within amino-acid degradation; L-alanine degradation via dehydrogenase pathway; NH(3) and pyruvate from L-alanine: step 1/1. Functionally, catalyzes the reversible reductive amination of pyruvate to L-alanine. This enzyme is a key factor in the assimilation of L-alanine as an energy source through the tricarboxylic acid cycle. The polypeptide is Alanine dehydrogenase (Methanococcus maripaludis (strain DSM 14266 / JCM 13030 / NBRC 101832 / S2 / LL)).